A 167-amino-acid chain; its full sequence is Mediator of RNA polymerase II transcription subunit 10 (167 aa).

Residues 141–158 (TGGRTVGGEGEGAGQGEG) show a composition bias toward gly residues. Residues 141 to 167 (TGGRTVGGEGEGAGQGEGGEGRGEGGN) form a disordered region.

Belongs to the Mediator complex subunit 10 family. In terms of assembly, component of the Mediator complex.

The protein localises to the nucleus. In terms of biological role, component of the Mediator complex, a coactivator involved in the regulated transcription of nearly all RNA polymerase II-dependent genes. Mediator functions as a bridge to convey information from gene-specific regulatory proteins to the basal RNA polymerase II transcription machinery. Mediator is recruited to promoters by direct interactions with regulatory proteins and serves as a scaffold for the assembly of a functional preinitiation complex with RNA polymerase II and the general transcription factors. This is Mediator of RNA polymerase II transcription subunit 10 (NUT2) from Chaetomium globosum (strain ATCC 6205 / CBS 148.51 / DSM 1962 / NBRC 6347 / NRRL 1970) (Soil fungus).